The following is a 354-amino-acid chain: tRNA pseudouridine synthase D (354 aa).

Asp-86 serves as the catalytic Nucleophile. Residues Gly-162 to Leu-309 form the TRUD domain.

Belongs to the pseudouridine synthase TruD family.

The enzyme catalyses uridine(13) in tRNA = pseudouridine(13) in tRNA. In terms of biological role, responsible for synthesis of pseudouridine from uracil-13 in transfer RNAs. The protein is tRNA pseudouridine synthase D of Methylococcus capsulatus (strain ATCC 33009 / NCIMB 11132 / Bath).